Reading from the N-terminus, the 204-residue chain is MLILASASQSRKKLLENCQIEFIQISSNFDETTIQEKNIFNLALELSFQKANSLSENIQNISLPEEFNYGPLEILGCDSIFEFKGEAYGKPSNKEEAFIRWKKMSGEFGFLHTGHTLIIGHFDSTSKIFKITEIIKKTVSSRVYFSKLEDWEIKSYVDTNEPLYCAGGFALEGIGGKYIEKIEGCFSNVMGLSLPWLRENLYRS.

Residue Asp78 is the Proton acceptor of the active site.

It belongs to the Maf family. It depends on a divalent metal cation as a cofactor.

Its subcellular location is the cytoplasm. It catalyses the reaction a ribonucleoside 5'-triphosphate + H2O = a ribonucleoside 5'-phosphate + diphosphate + H(+). It carries out the reaction a 2'-deoxyribonucleoside 5'-triphosphate + H2O = a 2'-deoxyribonucleoside 5'-phosphate + diphosphate + H(+). Functionally, nucleoside triphosphate pyrophosphatase. May have a dual role in cell division arrest and in preventing the incorporation of modified nucleotides into cellular nucleic acids. This chain is Nucleoside triphosphate pyrophosphatase, found in Prochlorococcus marinus (strain MIT 9215).